The following is a 428-amino-acid chain: Serine--tRNA ligase (428 aa).

Residue 235-237 coordinates L-serine; it reads TAE. ATP is bound at residue 266–268; it reads RYE. Glu-289 is a binding site for L-serine. Position 353–356 (353–356) interacts with ATP; it reads EVSS. Ser-389 contributes to the L-serine binding site.

The protein belongs to the class-II aminoacyl-tRNA synthetase family. Type-1 seryl-tRNA synthetase subfamily. Homodimer. The tRNA molecule binds across the dimer.

Its subcellular location is the cytoplasm. It carries out the reaction tRNA(Ser) + L-serine + ATP = L-seryl-tRNA(Ser) + AMP + diphosphate + H(+). It catalyses the reaction tRNA(Sec) + L-serine + ATP = L-seryl-tRNA(Sec) + AMP + diphosphate + H(+). It participates in aminoacyl-tRNA biosynthesis; selenocysteinyl-tRNA(Sec) biosynthesis; L-seryl-tRNA(Sec) from L-serine and tRNA(Sec): step 1/1. Its function is as follows. Catalyzes the attachment of serine to tRNA(Ser). Is also able to aminoacylate tRNA(Sec) with serine, to form the misacylated tRNA L-seryl-tRNA(Sec), which will be further converted into selenocysteinyl-tRNA(Sec). This is Serine--tRNA ligase from Blochmanniella pennsylvanica (strain BPEN).